Consider the following 337-residue polypeptide: DNA-directed RNA polymerase subunit alpha (337 aa).

An alpha N-terminal domain (alpha-NTD) region spans residues 1–233; that stretch reads MIQKNWQELI…DQLAIFVNFE (233 aa). The tract at residues 249–337 is alpha C-terminal domain (alpha-CTD); the sequence is FNPALLKKVD…DLAKRYEDQY (89 aa).

Belongs to the RNA polymerase alpha chain family. As to quaternary structure, homodimer. The RNAP catalytic core consists of 2 alpha, 1 beta, 1 beta' and 1 omega subunit. When a sigma factor is associated with the core the holoenzyme is formed, which can initiate transcription.

It carries out the reaction RNA(n) + a ribonucleoside 5'-triphosphate = RNA(n+1) + diphosphate. In terms of biological role, DNA-dependent RNA polymerase catalyzes the transcription of DNA into RNA using the four ribonucleoside triphosphates as substrates. The polypeptide is DNA-directed RNA polymerase subunit alpha (Brucella anthropi (strain ATCC 49188 / DSM 6882 / CCUG 24695 / JCM 21032 / LMG 3331 / NBRC 15819 / NCTC 12168 / Alc 37) (Ochrobactrum anthropi)).